A 208-amino-acid chain; its full sequence is 3-demethoxyubiquinol 3-hydroxylase (208 aa).

Positions 57, 87, 90, 139, 171, and 174 each coordinate Fe cation.

It belongs to the COQ7 family. The cofactor is Fe cation.

It is found in the cell membrane. The catalysed reaction is a 5-methoxy-2-methyl-3-(all-trans-polyprenyl)benzene-1,4-diol + AH2 + O2 = a 3-demethylubiquinol + A + H2O. It functions in the pathway cofactor biosynthesis; ubiquinone biosynthesis. Functionally, catalyzes the hydroxylation of 2-nonaprenyl-3-methyl-6-methoxy-1,4-benzoquinol during ubiquinone biosynthesis. This Burkholderia thailandensis (strain ATCC 700388 / DSM 13276 / CCUG 48851 / CIP 106301 / E264) protein is 3-demethoxyubiquinol 3-hydroxylase.